We begin with the raw amino-acid sequence, 649 residues long: MFSIKFKTTEELPEPSPRLIDQVIGQEEAVKIVLSAVKNKRNVILLGDPGVGKSMIVKAVGEILSDFGEFTPYYVIAKPNLKNMERPIVEVIDGEYKEDSKDMPKLDFKAPSSTTLLLIMIGAILLSEYLLKYLPQNYLLAAVTITALIVLIFGFVIILTSIMGASRASMPNNLNPMDLKPVLLYECKKRPLVRASAYNVTRLLGDIKHCPLGGRPPLGTPPHKRIILGAIHEAHRGILYVDEIKTMPLEVQDYILTALQDKQLPISGRNPNSSGATVETNPIPCDFILIMSGNMDDVYNLRAPLLDRIDYKIVLKNKMDNTLENRDKLLQFIVQEIKNNNLNPMTYDGCCEVVRIAQYLAGSKDKLTLRLRLLANIIKMANDVAMGKDVEELLGNFDDKGEYHPETQKDKSNKVYITAEHVRKVFDTGIYSMEKQVALNYIKNFKRYKHIVPNDEPKVGVIYGLAVLGAGGIGDVTKIIVQILESKNPGTHLLNISGDIAKHSITLASALSKKLVAEKKLPLPKKDIDLNNKEIYIQFSQSYSKIDGDSATAAVCLAIISALLDIPLKQDFAITGSLDLSGNVLAIGGVNEKIEAAKRYGFKRVIIPEANMIDVIETEGIEIIPVKTLDEIVPLVFDLDNRGGAERFN.

The Cytoplasmic portion of the chain corresponds to 1-114 (MFSIKFKTTE…KLDFKAPSST (114 aa)). 47–54 (GDPGVGKS) serves as a coordination point for ATP. The chain crosses the membrane as a helical span at residues 115 to 135 (TLLLIMIGAILLSEYLLKYLP). Residues 136 to 138 (QNY) lie on the Extracellular side of the membrane. The helical transmembrane segment at 139–159 (LLAAVTITALIVLIFGFVIIL) threads the bilayer. Topologically, residues 160 to 649 (TSIMGASRAS…DNRGGAERFN (490 aa)) are cytoplasmic. In terms of domain architecture, Lon proteolytic spans 456–639 (EPKVGVIYGL…DEIVPLVFDL (184 aa)). Residues S550 and K593 contribute to the active site.

This sequence belongs to the peptidase S16 family. Archaeal LonB subfamily. As to quaternary structure, homohexamer. Organized in a ring with a central cavity.

The protein localises to the cell membrane. ATP-dependent serine protease that mediates the selective degradation of mutant and abnormal proteins as well as certain short-lived regulatory proteins. Degrades polypeptides processively. The polypeptide is Archaeal Lon protease (Methanocaldococcus jannaschii (strain ATCC 43067 / DSM 2661 / JAL-1 / JCM 10045 / NBRC 100440) (Methanococcus jannaschii)).